A 295-amino-acid polypeptide reads, in one-letter code: Phosphatidylserine decarboxylase proenzyme (295 aa).

Active-site charge relay system; for autoendoproteolytic cleavage activity residues include Asp-113, His-169, and Ser-256. Ser-256 (schiff-base intermediate with substrate; via pyruvic acid; for decarboxylase activity) is an active-site residue. At Ser-256 the chain carries Pyruvic acid (Ser); by autocatalysis.

It belongs to the phosphatidylserine decarboxylase family. PSD-B subfamily. Prokaryotic type II sub-subfamily. Heterodimer of a large membrane-associated beta subunit and a small pyruvoyl-containing alpha subunit. Requires pyruvate as cofactor. Is synthesized initially as an inactive proenzyme. Formation of the active enzyme involves a self-maturation process in which the active site pyruvoyl group is generated from an internal serine residue via an autocatalytic post-translational modification. Two non-identical subunits are generated from the proenzyme in this reaction, and the pyruvate is formed at the N-terminus of the alpha chain, which is derived from the carboxyl end of the proenzyme. The autoendoproteolytic cleavage occurs by a canonical serine protease mechanism, in which the side chain hydroxyl group of the serine supplies its oxygen atom to form the C-terminus of the beta chain, while the remainder of the serine residue undergoes an oxidative deamination to produce ammonia and the pyruvoyl prosthetic group on the alpha chain. During this reaction, the Ser that is part of the protease active site of the proenzyme becomes the pyruvoyl prosthetic group, which constitutes an essential element of the active site of the mature decarboxylase.

The protein resides in the cell membrane. The enzyme catalyses a 1,2-diacyl-sn-glycero-3-phospho-L-serine + H(+) = a 1,2-diacyl-sn-glycero-3-phosphoethanolamine + CO2. Its pathway is phospholipid metabolism; phosphatidylethanolamine biosynthesis; phosphatidylethanolamine from CDP-diacylglycerol: step 2/2. Catalyzes the formation of phosphatidylethanolamine (PtdEtn) from phosphatidylserine (PtdSer). This chain is Phosphatidylserine decarboxylase proenzyme, found in Clostridium botulinum (strain ATCC 19397 / Type A).